The sequence spans 64 residues: Large ribosomal subunit protein bL28 (64 aa).

The protein belongs to the bacterial ribosomal protein bL28 family.

The chain is Large ribosomal subunit protein bL28 from Desulfotalea psychrophila (strain LSv54 / DSM 12343).